Here is a 174-residue protein sequence, read N- to C-terminus: MKDLTMLLDELKDMSFFNKGDICLIGCSTSEVIGEKIGTVGSMEVAETIFNALDVVSKETGVTFAFQGCEHINRAITIEKSQYNPLTMEEVSVVPDVHAGGSLATYAFQHMKDPIVVEHITVPCGIDIGQTLIGMHIKHVCVPVRTSVKQVGQAIVTIATSRPKKIGGERAKYQ.

Belongs to the UPF0340 family.

This chain is UPF0340 protein MW2038, found in Staphylococcus aureus (strain MW2).